A 958-amino-acid polypeptide reads, in one-letter code: Nuclear factor NF-kappa-B p100 subunit (958 aa).

The region spanning Leu40 to Gly230 is the RHD domain. Residues Arg343–Lys347 carry the Nuclear localization signal motif. Disordered regions lie at residues Pro350–Gln374 and Cys411–Ser442. The tract at residues Phe352–Ala390 is GRR. Over residues Tyr357–Gln374 the composition is skewed to gly residues. A compositionally biased stretch (polar residues) spans Ser412–Ile425. 6 ANK repeats span residues Asn500–Asn529, Leu539–Ile568, Tyr572–Leu603, His610–Ser639, Ser644–Ala674, and Gly678–Ser707. A disordered region spans residues Val705–Gln766. Residues Ser724–Thr734 show a composition bias toward acidic residues. A compositionally biased stretch (basic and acidic residues) spans Glu753 to Gln766. Residues Val815–Glu901 enclose the Death domain. Positions Ala904–Ser916 are enriched in basic and acidic residues. The disordered stretch occupies residues Ala904–Gln958. A compositionally biased stretch (polar residues) spans Ala917–Asn931.

In terms of assembly, active NF-kappa-B is a heterodimer of an about 52 kDa DNA-binding subunit and the weak DNA-binding subunit p65. Two heterodimers might form a labile tetramer. While translation occurs, the particular unfolded structure after the GRR repeat promotes the generation of p52 making it an acceptable substrate for the proteasome. This process is known as cotranslational processing. The processed form is active and the unprocessed form acts as an inhibitor (I kappa B-like), being able to form cytosolic complexes with NF-kappa B, trapping it in the cytoplasm. Complete folding of the region downstream of the GRR repeat precludes processing. In terms of processing, constitutive processing is tightly suppressed by its C-terminal processing inhibitory domain, named PID, which contains the death domain. Expressed in spleen.

Its subcellular location is the nucleus. The protein resides in the cytoplasm. Appears to have dual functions such as cytoplasmic retention of attached NF-kappa-B proteins and generation of p52 by a cotranslational processing. The proteasome-mediated process ensures the production of both p52 and p100 and preserves their independent function. p52 binds to the kappa-B consensus sequence 5'-GGRNNYYCC-3', located in the enhancer region of genes involved in immune response and acute phase reactions. In concert with RELB, may play a role in the regulation of the circadian clock. The polypeptide is Nuclear factor NF-kappa-B p100 subunit (nfkb2) (Xenopus laevis (African clawed frog)).